Consider the following 369-residue polypeptide: tRNA pseudouridine synthase D (369 aa).

Aspartate 80 serves as the catalytic Nucleophile. The TRUD domain maps to 156-318 (GIPNWFGEQR…LKQERRALRL (163 aa)).

This sequence belongs to the pseudouridine synthase TruD family.

The enzyme catalyses uridine(13) in tRNA = pseudouridine(13) in tRNA. Its function is as follows. Responsible for synthesis of pseudouridine from uracil-13 in transfer RNAs. The protein is tRNA pseudouridine synthase D of Xanthomonas axonopodis pv. citri (strain 306).